A 63-amino-acid polypeptide reads, in one-letter code: uncharacterized protein (63 aa).

A compositionally biased stretch (basic and acidic residues) spans 1–17; sequence MRYTDSRKLTPETDANH. The disordered stretch occupies residues 1-32; sequence MRYTDSRKLTPETDANHKTASPQPIRRISSQT. A compositionally biased stretch (polar residues) spans 18 to 32; the sequence is KTASPQPIRRISSQT.

This sequence to Y.enterocolitica HemP.

This is an uncharacterized protein from Escherichia coli (strain K12).